The sequence spans 403 residues: NADH-quinone oxidoreductase subunit D (403 aa).

It belongs to the complex I 49 kDa subunit family. NDH-1 is composed of 14 different subunits. Subunits NuoB, C, D, E, F, and G constitute the peripheral sector of the complex.

It localises to the cell inner membrane. The catalysed reaction is a quinone + NADH + 5 H(+)(in) = a quinol + NAD(+) + 4 H(+)(out). In terms of biological role, NDH-1 shuttles electrons from NADH, via FMN and iron-sulfur (Fe-S) centers, to quinones in the respiratory chain. The immediate electron acceptor for the enzyme in this species is believed to be ubiquinone. Couples the redox reaction to proton translocation (for every two electrons transferred, four hydrogen ions are translocated across the cytoplasmic membrane), and thus conserves the redox energy in a proton gradient. This Ruegeria sp. (strain TM1040) (Silicibacter sp.) protein is NADH-quinone oxidoreductase subunit D.